A 535-amino-acid polypeptide reads, in one-letter code: uncharacterized protein (535 aa).

Residues 17–37 traverse the membrane as a helical segment; the sequence is IVLLCMIGFFCTTFMRIHFAL. 2 N-linked (GlcNAc...) asparagine glycosylation sites follow: N44 and N61. 6 helical membrane-spanning segments follow: residues 107-127, 144-164, 167-187, 199-219, 225-245, and 292-312; these read LIFS…MFFI, ILVT…SVFL, IGMG…IGNW, IFTL…AAVC, WPAT…LWFF, and AFLG…LFQI. N329 carries an N-linked (GlcNAc...) asparagine glycan. 5 helical membrane passes run 331 to 351, 368 to 388, 395 to 415, 429 to 451, and 463 to 483; these read TFTA…GIGI, VSHG…AFFV, TGLI…SGFY, MSAI…MSMF, and IFIG…LFGS.

It belongs to the major facilitator superfamily. Sodium/anion cotransporter family.

The protein localises to the membrane. This is an uncharacterized protein from Caenorhabditis elegans.